The chain runs to 94 residues: Small ribosomal subunit protein uS19c (94 aa).

This sequence belongs to the universal ribosomal protein uS19 family.

It is found in the plastid. It localises to the chloroplast. Its function is as follows. Protein S19 forms a complex with S13 that binds strongly to the 16S ribosomal RNA. The sequence is that of Small ribosomal subunit protein uS19c from Pleurastrum terricola (Filamentous green alga).